The following is a 431-amino-acid chain: Tol-Pal system protein TolB (431 aa).

Residues 1–26 (MSLMTKLGFRALVASCLITAGSAANA) form the signal peptide. The disordered stretch occupies residues 406 to 431 (DGSAPPQILSVQGGSVREPSWGPFMQ).

The protein belongs to the TolB family. The Tol-Pal system is composed of five core proteins: the inner membrane proteins TolA, TolQ and TolR, the periplasmic protein TolB and the outer membrane protein Pal. They form a network linking the inner and outer membranes and the peptidoglycan layer.

Its subcellular location is the periplasm. Part of the Tol-Pal system, which plays a role in outer membrane invagination during cell division and is important for maintaining outer membrane integrity. The sequence is that of Tol-Pal system protein TolB from Burkholderia orbicola (strain MC0-3).